The sequence spans 702 residues: NAD(P)H-quinone oxidoreductase subunit 5, chloroplastic (702 aa).

The next 15 membrane-spanning stretches (helical) occupy residues 1-21 (WVIPLLPLPVIMSMGFGLFFI), 31-51 (IWAFPSVLFLSIAIVYSVHLS), 81-101 (IDPLTSIMLILITTVGILVLI), 117-137 (FVYISFFTTSMLGLVTSSNLI), 139-159 (IYFFWELVGMCSYLLIGFWFT), 177-197 (GDFGLLLGILGFFWITGSLEF), 211-231 (NGINSLLTTLCAFLLFLGAVA), 250-270 (TPISALIHAATMVAAGIFLLA), 272-292 (LFPLFISIPLIMTLISLVGTI), 319-339 (LGYMMLALGIGSYQAALFHLI), 346-366 (ALLFLGSGSVIHSMEPLVGYS), 388-408 (TTFLWGTLSLCGIPPLACFWS), 417-437 (WLYSPFFGIIASFTAGLTAFY), 534-554 (LFPLLILLFFTLFIGFIGISF), and 602-622 (SLAIIGLFIAYILYGSAYSFF).

This sequence belongs to the complex I subunit 5 family. As to quaternary structure, NDH is composed of at least 16 different subunits, 5 of which are encoded in the nucleus.

Its subcellular location is the plastid. The protein localises to the chloroplast thylakoid membrane. It carries out the reaction a plastoquinone + NADH + (n+1) H(+)(in) = a plastoquinol + NAD(+) + n H(+)(out). The enzyme catalyses a plastoquinone + NADPH + (n+1) H(+)(in) = a plastoquinol + NADP(+) + n H(+)(out). NDH shuttles electrons from NAD(P)H:plastoquinone, via FMN and iron-sulfur (Fe-S) centers, to quinones in the photosynthetic chain and possibly in a chloroplast respiratory chain. The immediate electron acceptor for the enzyme in this species is believed to be plastoquinone. Couples the redox reaction to proton translocation, and thus conserves the redox energy in a proton gradient. In Poa pratensis (Kentucky bluegrass), this protein is NAD(P)H-quinone oxidoreductase subunit 5, chloroplastic (ndhF).